The primary structure comprises 388 residues: Succinate--CoA ligase [ADP-forming] subunit beta (388 aa).

The ATP-grasp domain maps to 9–244 (KALFAEYGLP…PSQDDAREAH (236 aa)). ATP contacts are provided by residues lysine 46, 53–55 (GRG), glutamate 99, threonine 102, and glutamate 107. Positions 199 and 213 each coordinate Mg(2+). Substrate contacts are provided by residues asparagine 264 and 321-323 (GIV).

The protein belongs to the succinate/malate CoA ligase beta subunit family. Heterotetramer of two alpha and two beta subunits. Mg(2+) is required as a cofactor.

The catalysed reaction is succinate + ATP + CoA = succinyl-CoA + ADP + phosphate. It catalyses the reaction GTP + succinate + CoA = succinyl-CoA + GDP + phosphate. The protein operates within carbohydrate metabolism; tricarboxylic acid cycle; succinate from succinyl-CoA (ligase route): step 1/1. Functionally, succinyl-CoA synthetase functions in the citric acid cycle (TCA), coupling the hydrolysis of succinyl-CoA to the synthesis of either ATP or GTP and thus represents the only step of substrate-level phosphorylation in the TCA. The beta subunit provides nucleotide specificity of the enzyme and binds the substrate succinate, while the binding sites for coenzyme A and phosphate are found in the alpha subunit. This chain is Succinate--CoA ligase [ADP-forming] subunit beta, found in Shewanella sediminis (strain HAW-EB3).